Here is a 300-residue protein sequence, read N- to C-terminus: Dioxygenase FUM3 (300 aa).

3 residues coordinate Fe cation: histidine 146, aspartate 148, and histidine 222.

The protein belongs to the PhyH family. As to quaternary structure, homodimer. Fe cation serves as cofactor.

The protein operates within mycotoxin biosynthesis. Its function is as follows. Dioxygenase; part of the gene cluster that mediates the biosynthesis of fumonisins B1 (FB1), B2 (FB2), B3 (FB3), and B4 (FB4), which are carcinogenic mycotoxins. Within the pathway, FUM3 performs the C-5 hydroxylation present in FB1 and FB2 and which occurs late in the biosynthesis. The biosynthesis starts with the FUM1-catalyzed carbon chain assembly from one molecule of acetyl-CoA, eight molecules of malonyl-CoA, and two molecules of methionine (in S-adenosyl form). The C18 polyketide chain is released from the enzyme by a nucleophilic attack of a carbanion, which is derived from R-carbon of alanine by decarboxylation, on the carbonyl carbon of polyketide acyl chain. This step is catalyzed by the pyridoxal 5'-phosphate-dependent aminoacyl transferase FUM8. The resultant 3-keto intermediate is then stereospecifically reduced to a 3-hydroxyl product by reductase FUM13. Subsequent oxidations at C-10 by the cytochrome P450 monooxygenase FUM2, C-14 and C-15 by FUM6, FUM12 or FUM15, tricarballylic esterification of the hydroxyl groups on C-14 and C-15 by acyltransferase FUM14, and C-5 hydroxylation by 2-keto-glutarate-dependent dioxygenase FUM3 furnish the biosynthesis of fumonisins. The tricarballylic moieties are most likely derived from the citric acid cycle, and their addition to the carbon backbone may involve FUM7, FUM10, FUM11 and FUM14. The protein is Dioxygenase FUM3 of Gibberella moniliformis (strain M3125 / FGSC 7600) (Maize ear and stalk rot fungus).